A 143-amino-acid chain; its full sequence is Glycine cleavage system H protein 1 (143 aa).

The Lipoyl-binding domain maps to 26-107 (IYSVGMASIL…PYSSWIAKLK (82 aa)). Lys-67 is modified (N6-lipoyllysine).

It belongs to the GcvH family. The glycine cleavage system is composed of four proteins: P, T, L and H. The cofactor is (R)-lipoate.

In terms of biological role, the glycine cleavage system catalyzes the degradation of glycine. The H protein shuttles the methylamine group of glycine from the P protein to the T protein. This chain is Glycine cleavage system H protein 1, found in Aquifex aeolicus (strain VF5).